Reading from the N-terminus, the 651-residue chain is Peptide-N(4)-(N-acetyl-beta-glucosaminyl)asparagine amidase (651 aa).

Residue Ala2 is modified to N-acetylalanine. In terms of domain architecture, PUB spans 30-91; sequence EASKLLLTYA…EGETHLIFPK (62 aa). The interval 116 to 153 is disordered; that stretch reads SSQKVEFSQHPAAVRLPAEQPEDPTGLMQHSGNQPGQP. Over residues 143–152 the composition is skewed to polar residues; sequence MQHSGNQPGQ. 4 residues coordinate Zn(2+): Cys247, Cys250, Cys280, and Cys283. The Nucleophile role is filled by Cys306. Active-site residues include His333 and Asp350. The PAW domain occupies 451-651; it reads ELGGRVSGSL…LEIIITFSDL (201 aa).

It belongs to the transglutaminase-like superfamily. PNGase family. In terms of assembly, component of a complex required to couple retrotranslocation, ubiquitination and deglycosylation composed of NGLY1, SAKS1, AMFR, VCP and RAD23B. Interacts with the proteasome components RAD23B and PSMC1. Interacts with directly with VCP. Interacts with DERL1, bringing it close to the endoplasmic reticulum membrane. Interacts with SAKS1. The cofactor is Zn(2+).

The protein localises to the cytoplasm. The catalysed reaction is Hydrolysis of an N(4)-(acetyl-beta-D-glucosaminyl)asparagine residue in which the glucosamine residue may be further glycosylated, to yield a (substituted) N-acetyl-beta-D-glucosaminylamine and a peptide containing an aspartate residue.. With respect to regulation, inhibited by Z-VAD-fmk, a well-known caspase inhibitor, which inhibits enzyme activity through covalent binding of the carbohydrate to the single Cys-306 residue. Specifically deglycosylates the denatured form of N-linked glycoproteins in the cytoplasm and assists their proteasome-mediated degradation. Cleaves the beta-aspartyl-glucosamine (GlcNAc) of the glycan and the amide side chain of Asn, converting Asn to Asp. Prefers proteins containing high-mannose over those bearing complex type oligosaccharides. Can recognize misfolded proteins in the endoplasmic reticulum that are exported to the cytosol to be destroyed and deglycosylate them, while it has no activity toward native proteins. Deglycosylation is a prerequisite for subsequent proteasome-mediated degradation of some, but not all, misfolded glycoproteins. The chain is Peptide-N(4)-(N-acetyl-beta-glucosaminyl)asparagine amidase (Ngly1) from Rattus norvegicus (Rat).